A 170-amino-acid chain; its full sequence is Penton capsid protein P1 (170 aa).

The segment at 1–25 (MVETTQHFVSIESSNRPDPANTTPA) is disordered. N-linked (Glc...) asparagine; by host glycosylation is found at N21, N93, N129, and N137.

In terms of processing, glycosylated. The pattern of glycosylation sites are unusual.

Its subcellular location is the virion. In terms of biological role, constitutes the 12 pentameric capsomers positioned at the 5-fold vertices of the outer capsid shell. One of the vertex is composed of a variant of P1 (type II pentameric capsomer) and has thereby a structure slightly different from the other verteces (type I pentameric capsomers). This is Penton capsid protein P1 from Paramecium bursaria Chlorella virus 1 (PBCV-1).